The sequence spans 106 residues: Large ribosomal subunit protein bL21 (106 aa).

The protein belongs to the bacterial ribosomal protein bL21 family. Part of the 50S ribosomal subunit. Contacts protein L20.

This protein binds to 23S rRNA in the presence of protein L20. The protein is Large ribosomal subunit protein bL21 of Dichelobacter nodosus (strain VCS1703A).